The primary structure comprises 372 residues: Cytochrome b (372 aa).

4 consecutive transmembrane segments (helical) span residues 25-45 (FGSMLLTCLALQTMTGFFLAI), 69-90 (WIMQNIHAISASLFFICIYIHI), 105-125 (WLSGTTLLITLMATAFFGYVL), and 170-190 (FFALHFILPFAIISLSSIHII). 2 residues coordinate heme b: His-75 and His-89. Heme b contacts are provided by His-174 and His-188. His-193 provides a ligand contact to a ubiquinone. Helical transmembrane passes span 218-238 (YKDMLMITSMITLLFIILSFS), 280-300 (LGGTLALLTSVAILTTVPFTH), 312-332 (LSQALFWTLIATFITITWTAS), and 339-358 (FVTISQTTSIIYFSFFITIP).

It belongs to the cytochrome b family. As to quaternary structure, the cytochrome bc1 complex contains 3 respiratory subunits (MT-CYB, CYC1 and UQCRFS1), 2 core proteins (UQCRC1 and UQCRC2) and probably 6 low-molecular weight proteins. Heme b is required as a cofactor.

Its subcellular location is the mitochondrion inner membrane. Functionally, component of the ubiquinol-cytochrome c reductase complex (complex III or cytochrome b-c1 complex) that is part of the mitochondrial respiratory chain. The b-c1 complex mediates electron transfer from ubiquinol to cytochrome c. Contributes to the generation of a proton gradient across the mitochondrial membrane that is then used for ATP synthesis. The sequence is that of Cytochrome b (MT-CYB) from Naja multifasciata (Burrowing cobra).